We begin with the raw amino-acid sequence, 57 residues long: UPF0391 membrane protein BRADO5617 (57 aa).

2 helical membrane-spanning segments follow: residues 1-21 (MLGW…LGFG) and 30-50 (IAKI…VVGL).

It belongs to the UPF0391 family.

It localises to the cell membrane. This is UPF0391 membrane protein BRADO5617 from Bradyrhizobium sp. (strain ORS 278).